The primary structure comprises 352 residues: Molybdenum import ATP-binding protein ModC (352 aa).

The ABC transporter domain occupies 1–229 (MLELNFSQTL…SVMNPWLPKE (229 aa)). Position 31–38 (31–38 (GVSGAGKT)) interacts with ATP. The region spanning 289–352 (QTSIRNVLRA…AQIKSVSITA (64 aa)) is the Mop domain.

It belongs to the ABC transporter superfamily. Molybdate importer (TC 3.A.1.8) family. The complex is composed of two ATP-binding proteins (ModC), two transmembrane proteins (ModB) and a solute-binding protein (ModA).

The protein localises to the cell inner membrane. The enzyme catalyses molybdate(out) + ATP + H2O = molybdate(in) + ADP + phosphate + H(+). Part of the ABC transporter complex ModABC involved in molybdenum import. Responsible for energy coupling to the transport system. The sequence is that of Molybdenum import ATP-binding protein ModC from Shigella flexneri.